Reading from the N-terminus, the 173-residue chain is Putative metal-dependent hydrolase BC_2708 (173 aa).

Zn(2+) contacts are provided by H65, H156, and H160.

Belongs to the metal hydrolase YfiT family. As to quaternary structure, homodimer. Zn(2+) serves as cofactor.

The protein resides in the cytoplasm. In terms of biological role, possible metal-dependent hydrolase. The protein is Putative metal-dependent hydrolase BC_2708 of Bacillus cereus (strain ATCC 14579 / DSM 31 / CCUG 7414 / JCM 2152 / NBRC 15305 / NCIMB 9373 / NCTC 2599 / NRRL B-3711).